We begin with the raw amino-acid sequence, 160 residues long: Phosphopantetheine adenylyltransferase (160 aa).

Thr11 contributes to the substrate binding site. ATP is bound by residues 11–12 (TF) and His19. Lys43, Thr75, and Arg89 together coordinate substrate. Residues 90 to 92 (GLR), Glu100, and 125 to 131 (YSFLSSS) contribute to the ATP site.

This sequence belongs to the bacterial CoaD family. In terms of assembly, homohexamer. The cofactor is Mg(2+).

Its subcellular location is the cytoplasm. It carries out the reaction (R)-4'-phosphopantetheine + ATP + H(+) = 3'-dephospho-CoA + diphosphate. It functions in the pathway cofactor biosynthesis; coenzyme A biosynthesis; CoA from (R)-pantothenate: step 4/5. Reversibly transfers an adenylyl group from ATP to 4'-phosphopantetheine, yielding dephospho-CoA (dPCoA) and pyrophosphate. This chain is Phosphopantetheine adenylyltransferase, found in Listeria monocytogenes serotype 4b (strain CLIP80459).